The primary structure comprises 440 residues: uncharacterized protein (440 aa).

The N-terminal stretch at M1–A19 is a signal peptide.

This is an uncharacterized protein from Rickettsia typhi (strain ATCC VR-144 / Wilmington).